Reading from the N-terminus, the 402-residue chain is Protein FAM53A (402 aa).

S119 carries the phosphoserine modification. The disordered stretch occupies residues 170–215; that stretch reads LVPGLPRRPVSPAGPTSPLTPRPASASSGFVDGSEGSTSSGPPWLS. The short motif at 273-281 is the Nuclear localization signal element; sequence RRVRRKRRR. Phosphoserine is present on residues S306 and S309. Polar residues predominate over residues 323-333; that stretch reads TLVSSPCNSQG. The disordered stretch occupies residues 323 to 402; the sequence is TLVSSPCNSQ…DLDLEQIENN (80 aa). Residues 336–345 show a composition bias toward low complexity; sequence GIITPSSSPR.

Belongs to the FAM53 family.

It localises to the nucleus. Functionally, may play an important role in neural development; the dorsomedial roof of the third ventricle. The polypeptide is Protein FAM53A (Mus musculus (Mouse)).